A 1447-amino-acid chain; its full sequence is MGARASVLSGGELDRWEKIRLRPGGKKKYKLKHIVWASRELERFAVNPGLLETSEGCRQILGQLQPSLQTGSEELRSLYNTVATLYCVHQRIEIKDTKEALDKIEEEQNKSKKKAQQAAADTGHSSQVSQNYPIVQNIQGQMVHQAISPRTLNAWVKVVEEKAFSPEVIPMFSALSEGATPQDLNTMLNTVGGHQAAMQMLKETINEEAAEWDRVHPVHAGPIAPGQMREPRGSDIAGTTSTLQEQIGWMTNNPPIPVGEIYKRWIILGLNKIVRMYSPTSILDIRQGPKEPFRDYVDRFYKTLRAEQASQEVKNWMTETLLVQNANPDCKTILKALGPAATLEEMMTACQGVGGPGHKARVLAEAMSQVTNTATIMMQRGNFRNQRKMVKCFNCGKEGHTARNCRAPRKKGCWKCGKEGHQMKDCTERQANFLREDLAFLQGKAREFSSEQTRANSPTISSEQTRANSPTRRELQVWGRDNNSPSEAGADRQGTVSFNFPQITLWQRPLVTIKIGGQLKEALLDTGADDTVLEEMSLPGRWKPKMIGGIGGFIKVRQYDQILIEICGHKAIGTVLVGPTPVNIIGRNLLTQIGCTLNFPISPIETVPVKLKPGMDGPKVKQWPLTEEKIKALVEICTEMEKEGKISKIGPENPYNTPVFAIKKKDSTKWRKLVDFRELNKRTQDFWEVQLGIPHPAGLKKKKSVTVLDVGDAYFSVPLDEDFRKYTAFTIPSINNETPGIRYQYNVLPQGWKGSPAIFQSSMTKILEPFKKQNPDIVIYQYMDDLYVGSDLEIGQHRTKIEELRQHLLRWGLTTPDKKHQKEPPFLWMGYELHPDKWTVQPIVLPEKDSWTVNDIQKLVGKLNWASQIYPGIKVRQLCKLLRGTKALTEVIPLTEEAELELAENREILKEPVHGVYYDPSKDLIAEIQKQGQGQWTYQIYQEPFKNLKTGKYARMRGAHTNDVKQLTEAVQKITTESIVIWGKTPKFKLPIQKETWETWWTEYWQATWIPEWEFVNTPPLVKLWYQLEKEPIVGAETFYVDGAANRETKLGKAGYVTNKGRQKVVPLTNTTNQKTELQAIYLALQDSGLEVNIVTDSQYALGIIQAQPDKSESELVNQIIEQLIKKEKVYLAWVPAHKGIGGNEQVDKLVSAGIRKILFLDGIDKAQDEHEKYHSNWRAMASDFNLPPVVAKEIVASCDKCQLKGEAMHGQVDCSPGIWQLDCTHLEGKVILVAVHVASGYIEAEVIPAETGQETAYFLLKLAGRWPVKTIHTDNGSNFTSATVKAACWWAGIKQEFGIPYNPQSQGVVESMNKELKKIIGQVRDQAEHLKTAVQMAVFIHNFKRKGGIGGYSAGERIVDIIATDIQTKELQKQITKIQNFRVYYRDSRNPLWKGPAKLLWKGEGAVVIQDNSDIKVVPRRKAKIIRDYGKQMAGDDCVASRQDED.

The N-myristoyl glycine; by host moiety is linked to residue glycine 2. The interaction with Gp41 stretch occupies residues 7-31 (VLSGGELDRWEKIRLRPGGKKKYKL). Positions 8-43 (LSGGELDRWEKIRLRPGGKKKYKLKHIVWASRELER) are interaction with host CALM1. An interaction with host AP3D1 region spans residues 12-19 (ELDRWEKI). Residues 14-33 (DRWEKIRLRPGGKKKYKLKH) are interaction with membrane phosphatidylinositol 4,5-bisphosphate and RNA. The Nuclear export signal signature appears at 16-22 (WEKIRLR). The Nuclear localization signal motif lies at 26-32 (KKKYKLK). The segment at 73–77 (EELRS) is interaction with membrane phosphatidylinositol 4,5-bisphosphate. The segment at 106 to 128 (EEQNKSKKKAQQAAADTGHSSQV) is disordered. Tyrosine 132 carries the phosphotyrosine; by host modification. The segment at 189–227 (NTVGGHQAAMQMLKETINEEAAEWDRVHPVHAGPIAPGQ) is interaction with human PPIA/CYPA and NUP153. The dimerization/Multimerization of capsid protein p24 stretch occupies residues 277-363 (YSPTSILDIR…GGPGHKARVL (87 aa)). Arginine 387 is subject to Asymmetric dimethylarginine; in Nucleocapsid protein p7; by host PRMT6. The segment at 390–407 (VKCFNCGKEGHTARNCRA) adopts a CCHC-type 1 zinc-finger fold. Position 409 is an asymmetric dimethylarginine; in Nucleocapsid protein p7; by host PRMT6 (arginine 409). Residues 411–428 (KGCWKCGKEGHQMKDCTE) form a CCHC-type 2 zinc finger. The interval 446–493 (REFSSEQTRANSPTISSEQTRANSPTRRELQVWGRDNNSPSEAGADRQ) is disordered. Polar residues predominate over residues 450-470 (SEQTRANSPTISSEQTRANSP). Residues 501 to 505 (PQITL) form a dimerization of protease region. Positions 520-589 (KEALLDTGAD…TPVNIIGRNL (70 aa)) constitute a Peptidase A2 domain. Aspartate 525 serves as the catalytic For protease activity; shared with dimeric partner. Dimerization of protease regions lie at residues 549-555 (GIGGFIK) and 588-600 (NLLTQIGCTLNFP). The region spanning 643–833 (EGKISKIGPE…PPFLWMGYEL (191 aa)) is the Reverse transcriptase domain. Mg(2+) contacts are provided by aspartate 709, aspartate 784, and aspartate 785. The RT 'primer grip' stretch occupies residues 826 to 834 (FLWMGYELH). The short motif at 997-1013 (WETWWTEYWQATWIPEW) is the Tryptophan repeat motif element. The 124-residue stretch at 1033–1156 (IVGAETFYVD…VDKLVSAGIR (124 aa)) folds into the RNase H type-1 domain. 4 residues coordinate Mg(2+): aspartate 1042, glutamate 1077, aspartate 1097, and aspartate 1148. The Integrase-type zinc finger occupies 1162 to 1203 (DGIDKAQDEHEKYHSNWRAMASDFNLPPVVAKEIVASCDKCQ). 4 residues coordinate Zn(2+): histidine 1171, histidine 1175, cysteine 1199, and cysteine 1202. An Integrase catalytic domain is found at 1213–1363 (VDCSPGIWQL…SAGERIVDII (151 aa)). Residues aspartate 1223, aspartate 1275, and glutamate 1311 each coordinate Mg(2+). A DNA-binding region (integrase-type) is located at residues 1382–1429 (FRVYYRDSRNPLWKGPAKLLWKGEGAVVIQDNSDIKVVPRRKAKIIRD).

As to quaternary structure, homotrimer; further assembles as hexamers of trimers. Interacts with gp41 (via C-terminus). Interacts with host CALM1; this interaction induces a conformational change in the Matrix protein, triggering exposure of the myristate group. Interacts with host AP3D1; this interaction allows the polyprotein trafficking to multivesicular bodies during virus assembly. Part of the pre-integration complex (PIC) which is composed of viral genome, matrix protein, Vpr and integrase. In terms of assembly, homodimer; the homodimer further multimerizes as homohexamers or homopentamers. Interacts with human PPIA/CYPA; This interaction stabilizes the capsid. Interacts with human NUP153. Interacts with host PDZD8; this interaction stabilizes the capsid. Interacts with monkey TRIM5; this interaction destabilizes the capsid. Homodimer, whose active site consists of two apposed aspartic acid residues. As to quaternary structure, heterodimer of p66 RT and p51 RT (RT p66/p51). Heterodimerization of RT is essential for DNA polymerase activity. The overall folding of the subdomains is similar in p66 RT and p51 RT but the spatial arrangements of the subdomains are dramatically different. In terms of assembly, homotetramer; may further associate as a homohexadecamer. Part of the pre-integration complex (PIC) which is composed of viral genome, matrix protein, Vpr and integrase. Interacts with human SMARCB1/INI1 and human PSIP1/LEDGF isoform 1. Interacts with human KPNA3; this interaction might play a role in nuclear import of the pre-integration complex. Interacts with human NUP153; this interaction might play a role in nuclear import of the pre-integration complex. Mg(2+) serves as cofactor. Post-translationally, specific enzymatic cleavages by the viral protease yield mature proteins. The protease is released by autocatalytic cleavage. The polyprotein is cleaved during and after budding, this process is termed maturation. Proteolytic cleavage of p66 RT removes the RNase H domain to yield the p51 RT subunit. Nucleocapsid protein p7 might be further cleaved after virus entry. Tyrosine phosphorylated presumably in the virion by a host kinase. Phosphorylation is apparently not a major regulator of membrane association. In terms of processing, phosphorylated possibly by host MAPK1; this phosphorylation is necessary for Pin1-mediated virion uncoating. Post-translationally, methylated by host PRMT6, impairing its function by reducing RNA annealing and the initiation of reverse transcription.

The protein localises to the host cell membrane. Its subcellular location is the host endosome. The protein resides in the host multivesicular body. It localises to the virion membrane. It is found in the host nucleus. The protein localises to the host cytoplasm. Its subcellular location is the virion. The catalysed reaction is Specific for a P1 residue that is hydrophobic, and P1' variable, but often Pro.. It catalyses the reaction 3'-end directed exonucleolytic cleavage of viral RNA-DNA hybrid.. It carries out the reaction Endohydrolysis of RNA in RNA/DNA hybrids. Three different cleavage modes: 1. sequence-specific internal cleavage of RNA. Human immunodeficiency virus type 1 and Moloney murine leukemia virus enzymes prefer to cleave the RNA strand one nucleotide away from the RNA-DNA junction. 2. RNA 5'-end directed cleavage 13-19 nucleotides from the RNA end. 3. DNA 3'-end directed cleavage 15-20 nucleotides away from the primer terminus.. The enzyme catalyses DNA(n) + a 2'-deoxyribonucleoside 5'-triphosphate = DNA(n+1) + diphosphate. With respect to regulation, protease: The viral protease is inhibited by many synthetic protease inhibitors (PIs), such as amprenavir, atazanavir, indinavir, loprinavir, nelfinavir, ritonavir and saquinavir. Use of protease inhibitors in tritherapy regimens permit more ambitious therapeutic strategies. Reverse transcriptase/ribonuclease H: RT can be inhibited either by nucleoside RT inhibitors (NRTIs) or by non nucleoside RT inhibitors (NNRTIs). NRTIs act as chain terminators, whereas NNRTIs inhibit DNA polymerization by binding a small hydrophobic pocket near the RT active site and inducing an allosteric change in this region. Classical NRTIs are abacavir, adefovir (PMEA), didanosine (ddI), lamivudine (3TC), stavudine (d4T), tenofovir (PMPA), zalcitabine (ddC), and zidovudine (AZT). Classical NNRTIs are atevirdine (BHAP U-87201E), delavirdine, efavirenz (DMP-266), emivirine (I-EBU), and nevirapine (BI-RG-587). The tritherapies used as a basic effective treatment of AIDS associate two NRTIs and one NNRTI. In terms of biological role, mediates, with Gag polyprotein, the essential events in virion assembly, including binding the plasma membrane, making the protein-protein interactions necessary to create spherical particles, recruiting the viral Env proteins, and packaging the genomic RNA via direct interactions with the RNA packaging sequence (Psi). Gag-Pol polyprotein may regulate its own translation, by the binding genomic RNA in the 5'-UTR. At low concentration, the polyprotein would promote translation, whereas at high concentration, the polyprotein would encapsidate genomic RNA and then shut off translation. Its function is as follows. Targets the polyprotein to the plasma membrane via a multipartite membrane-binding signal, that includes its myristoylated N-terminus. Matrix protein is part of the pre-integration complex. Implicated in the release from host cell mediated by Vpu. Binds to RNA. Forms the conical core that encapsulates the genomic RNA-nucleocapsid complex in the virion. Most core are conical, with only 7% tubular. The core is constituted by capsid protein hexamer subunits. The core is disassembled soon after virion entry. Host restriction factors such as TRIM5-alpha or TRIMCyp bind retroviral capsids and cause premature capsid disassembly, leading to blocks in reverse transcription. Capsid restriction by TRIM5 is one of the factors which restricts HIV-1 to the human species. Host PIN1 apparently facilitates the virion uncoating. On the other hand, interactions with PDZD8 or CYPA stabilize the capsid. Functionally, encapsulates and protects viral dimeric unspliced genomic RNA (gRNA). Binds these RNAs through its zinc fingers. Acts as a nucleic acid chaperone which is involved in rearangement of nucleic acid secondary structure during gRNA retrotranscription. Also facilitates template switch leading to recombination. As part of the polyprotein, participates in gRNA dimerization, packaging, tRNA incorporation and virion assembly. In terms of biological role, aspartyl protease that mediates proteolytic cleavages of Gag and Gag-Pol polyproteins during or shortly after the release of the virion from the plasma membrane. Cleavages take place as an ordered, step-wise cascade to yield mature proteins. This process is called maturation. Displays maximal activity during the budding process just prior to particle release from the cell. Also cleaves Nef and Vif, probably concomitantly with viral structural proteins on maturation of virus particles. Hydrolyzes host EIF4GI and PABP1 in order to shut off the capped cellular mRNA translation. The resulting inhibition of cellular protein synthesis serves to ensure maximal viral gene expression and to evade host immune response. Also mediates cleavage of host YTHDF3. Mediates cleavage of host CARD8, thereby activating the CARD8 inflammasome, leading to the clearance of latent HIV-1 in patient CD4(+) T-cells after viral reactivation; in contrast, HIV-1 can evade CARD8-sensing when its protease remains inactive in infected cells prior to viral budding. Its function is as follows. Multifunctional enzyme that converts the viral RNA genome into dsDNA in the cytoplasm, shortly after virus entry into the cell. This enzyme displays a DNA polymerase activity that can copy either DNA or RNA templates, and a ribonuclease H (RNase H) activity that cleaves the RNA strand of RNA-DNA heteroduplexes in a partially processive 3' to 5' endonucleasic mode. Conversion of viral genomic RNA into dsDNA requires many steps. A tRNA(3)-Lys binds to the primer-binding site (PBS) situated at the 5'-end of the viral RNA. RT uses the 3' end of the tRNA primer to perform a short round of RNA-dependent minus-strand DNA synthesis. The reading proceeds through the U5 region and ends after the repeated (R) region which is present at both ends of viral RNA. The portion of the RNA-DNA heteroduplex is digested by the RNase H, resulting in a ssDNA product attached to the tRNA primer. This ssDNA/tRNA hybridizes with the identical R region situated at the 3' end of viral RNA. This template exchange, known as minus-strand DNA strong stop transfer, can be either intra- or intermolecular. RT uses the 3' end of this newly synthesized short ssDNA to perform the RNA-dependent minus-strand DNA synthesis of the whole template. RNase H digests the RNA template except for two polypurine tracts (PPTs) situated at the 5'-end and near the center of the genome. It is not clear if both polymerase and RNase H activities are simultaneous. RNase H probably can proceed both in a polymerase-dependent (RNA cut into small fragments by the same RT performing DNA synthesis) and a polymerase-independent mode (cleavage of remaining RNA fragments by free RTs). Secondly, RT performs DNA-directed plus-strand DNA synthesis using the PPTs that have not been removed by RNase H as primers. PPTs and tRNA primers are then removed by RNase H. The 3' and 5' ssDNA PBS regions hybridize to form a circular dsDNA intermediate. Strand displacement synthesis by RT to the PBS and PPT ends produces a blunt ended, linear dsDNA copy of the viral genome that includes long terminal repeats (LTRs) at both ends. Catalyzes viral DNA integration into the host chromosome, by performing a series of DNA cutting and joining reactions. This enzyme activity takes place after virion entry into a cell and reverse transcription of the RNA genome in dsDNA. The first step in the integration process is 3' processing. This step requires a complex comprising the viral genome, matrix protein, Vpr and integrase. This complex is called the pre-integration complex (PIC). The integrase protein removes 2 nucleotides from each 3' end of the viral DNA, leaving recessed CA OH's at the 3' ends. In the second step, the PIC enters cell nucleus. This process is mediated through integrase and Vpr proteins, and allows the virus to infect a non dividing cell. This ability to enter the nucleus is specific of lentiviruses, other retroviruses cannot and rely on cell division to access cell chromosomes. In the third step, termed strand transfer, the integrase protein joins the previously processed 3' ends to the 5' ends of strands of target cellular DNA at the site of integration. The 5'-ends are produced by integrase-catalyzed staggered cuts, 5 bp apart. A Y-shaped, gapped, recombination intermediate results, with the 5'-ends of the viral DNA strands and the 3' ends of target DNA strands remaining unjoined, flanking a gap of 5 bp. The last step is viral DNA integration into host chromosome. This involves host DNA repair synthesis in which the 5 bp gaps between the unjoined strands are filled in and then ligated. Since this process occurs at both cuts flanking the HIV genome, a 5 bp duplication of host DNA is produced at the ends of HIV-1 integration. Alternatively, Integrase may catalyze the excision of viral DNA just after strand transfer, this is termed disintegration. This is Gag-Pol polyprotein (gag-pol) from Human immunodeficiency virus type 1 group M subtype B (isolate BH10) (HIV-1).